Reading from the N-terminus, the 565-residue chain is NAD-dependent malic enzyme (565 aa).

Catalysis depends on Tyr103, which acts as the Proton donor. Lys177 (proton acceptor) is an active-site residue. Residues Glu248, Asp249, and Asp272 each contribute to the a divalent metal cation site. NAD(+) is bound by residues Asp272 and Asn419. A Phosphoserine modification is found at Ser445.

Belongs to the malic enzymes family. The cofactor is Mg(2+). Requires Mn(2+) as cofactor.

It carries out the reaction (S)-malate + NAD(+) = pyruvate + CO2 + NADH. The catalysed reaction is oxaloacetate + H(+) = pyruvate + CO2. This Schizosaccharomyces pombe (strain 972 / ATCC 24843) (Fission yeast) protein is NAD-dependent malic enzyme (mae2).